Reading from the N-terminus, the 228-residue chain is R-spondin-4 (228 aa).

Residues 1–19 (MRAPLCLLLLLAHAVDMLA) form the signal peptide. An N-linked (GlcNAc...) asparagine glycan is attached at Asn-34. 11 disulfides stabilise this stretch: Cys-35–Cys-41, Cys-38–Cys-47, Cys-50–Cys-69, Cys-73–Cys-88, Cys-91–Cys-98, Cys-95–Cys-104, Cys-107–Cys-118, Cys-122–Cys-135, Cys-139–Cys-181, Cys-150–Cys-157, and Cys-190–Cys-196. One copy of the FU repeat lies at 85–128 (ANRCKKCGATCESCFSQDFCIRCKRRFHLYKGKCLPSCPPGTLT). The 60-residue stretch at 138-197 (ECEPSPWGSWSPCIHNGKTCGSGWGLETRVREAGPAKQEETASCRVLSESRKCPIKRLCP) folds into the TSP type-1 domain. The disordered stretch occupies residues 193 to 228 (KRLCPGERNPRQKNRKDRRQRKDRKLERRPHQRGSQ). Basic residues predominate over residues 203–228 (RQKNRKDRRQRKDRKLERRPHQRGSQ).

This sequence belongs to the R-spondin family. In terms of assembly, binds heparin. Interacts with LGR4, LGR5 and LGR6.

It localises to the secreted. Its function is as follows. Activator of the canonical Wnt signaling pathway by acting as a ligand for LGR4-6 receptors. Upon binding to LGR4-6 (LGR4, LGR5 or LGR6), LGR4-6 associate with phosphorylated LRP6 and frizzled receptors that are activated by extracellular Wnt receptors, triggering the canonical Wnt signaling pathway to increase expression of target genes. Also regulates the canonical Wnt/beta-catenin-dependent pathway and non-canonical Wnt signaling by acting as an inhibitor of ZNRF3, an important regulator of the Wnt signaling pathway. The polypeptide is R-spondin-4 (Rspo4) (Mus musculus (Mouse)).